The following is a 133-amino-acid chain: Ribonuclease P protein component (133 aa).

The protein belongs to the RnpA family. In terms of assembly, consists of a catalytic RNA component (M1 or rnpB) and a protein subunit.

The enzyme catalyses Endonucleolytic cleavage of RNA, removing 5'-extranucleotides from tRNA precursor.. RNaseP catalyzes the removal of the 5'-leader sequence from pre-tRNA to produce the mature 5'-terminus. It can also cleave other RNA substrates such as 4.5S RNA. The protein component plays an auxiliary but essential role in vivo by binding to the 5'-leader sequence and broadening the substrate specificity of the ribozyme. This is Ribonuclease P protein component from Pseudomonas savastanoi pv. phaseolicola (strain 1448A / Race 6) (Pseudomonas syringae pv. phaseolicola (strain 1448A / Race 6)).